Reading from the N-terminus, the 800-residue chain is Receptor like protein 26 (800 aa).

A signal peptide spans 1–19 (MRLHFCSLLLLYCIVFVSS). At 20–733 (FLTTDALACL…EEEDEVIEWK (714 aa)) the chain is on the extracellular side. N49, N61, N83, N96, N101, and N113 each carry an N-linked (GlcNAc...) asparagine glycan. LRR repeat units lie at residues 89–113 (LHQL…EFSN), 115–138 (TRLE…ISNL), 139–161 (ILLT…VRNL), 162–185 (TKLS…LLPT), 187–212 (PFLS…SSSS), 214–235 (LVRL…ISKL), 236–259 (INLN…VFAP), 260–281 (LKSL…LSSD), 285–307 (PLSL…IFKT), 308–332 (LQNL…FWKL), 334–357 (RLSI…VLLN), and 358–381 (SSVQ…PLGS). N145 and N160 each carry an N-linked (GlcNAc...) asparagine glycan. N-linked (GlcNAc...) asparagine glycosylation occurs at N207. N-linked (GlcNAc...) asparagine glycosylation occurs at N247. N-linked (GlcNAc...) asparagine glycans are attached at residues N342 and N357. The stretch at 382 to 401 (IYLSAWNNSFTGNIPLSICN) is one LRR 13; degenerate repeat. N-linked (GlcNAc...) asparagine glycosylation is found at N388 and N401. LRR repeat units follow at residues 402-423 (RSSL…PQCL), 424-446 (SNLK…EFHS), 448-471 (AKTQ…LLNC), 472-494 (SSLR…WLKA), 495-519 (LPNL…DRGP), 522-546 (FPEL…FFVN), 591-615 (LTFY…IGLL), 616-639 (KELI…LANV), 640-663 (TELE…LGSL), and 665-688 (FLAY…QFSG). An N-linked (GlcNAc...) asparagine glycan is attached at N470. N622 and N638 each carry an N-linked (GlcNAc...) asparagine glycan. The chain crosses the membrane as a helical span at residues 734 to 754 (AVFFGYWPGLLLGLVMAHVIA). The Cytoplasmic portion of the chain corresponds to 755–800 (SFKPKWFVKILGPAKGKQVDPVRLFMNLDSRWDSFNNKDTVEEEVI).

This sequence belongs to the RLP family.

Its subcellular location is the cell membrane. This chain is Receptor like protein 26, found in Arabidopsis thaliana (Mouse-ear cress).